Reading from the N-terminus, the 98-residue chain is NADH-ubiquinone oxidoreductase chain 4L (98 aa).

Helical transmembrane passes span 2-22 (PSIFTNIILAFATALLGTLVF), 29-49 (SLLCLEGMMLSLFTLSTLIIL), and 61-81 (ILLLVFAACEAAIGLALLVMV).

Belongs to the complex I subunit 4L family. As to quaternary structure, core subunit of respiratory chain NADH dehydrogenase (Complex I) which is composed of 45 different subunits.

The protein resides in the mitochondrion inner membrane. The catalysed reaction is a ubiquinone + NADH + 5 H(+)(in) = a ubiquinol + NAD(+) + 4 H(+)(out). Core subunit of the mitochondrial membrane respiratory chain NADH dehydrogenase (Complex I) which catalyzes electron transfer from NADH through the respiratory chain, using ubiquinone as an electron acceptor. Part of the enzyme membrane arm which is embedded in the lipid bilayer and involved in proton translocation. This is NADH-ubiquinone oxidoreductase chain 4L (MT-ND4L) from Avahi laniger (Eastern woolly lemur).